The primary structure comprises 614 residues: Sorting nexin-18 (614 aa).

In terms of domain architecture, SH3 spans Met-1–Ala-61. Residues Gly-85–Gln-218 are disordered. Over residues Pro-90 to Leu-101 the composition is skewed to pro residues. Acidic residues predominate over residues Ser-141–Asp-151. Positions Phe-266 to Asp-376 constitute a PX domain. Residues Arg-302, Lys-304, and Arg-342 each coordinate a 1,2-diacyl-sn-glycero-3-phospho-(1D-myo-inositol-4,5-bisphosphate). The BAR domain maps to Leu-411–Val-614.

This sequence belongs to the sorting nexin family. As to quaternary structure, heterodimer with SNX9. Interacts with ITCH. Interacts with dynamin-2 (DNM2), SYNJ1 and WASL. Interacts with the AP-1 complex. Interacts with FCHSD1 (via the F-BAR domain).

Its subcellular location is the endomembrane system. The protein localises to the endosome membrane. It localises to the recycling endosome membrane. The protein resides in the cell membrane. It is found in the cytoplasmic vesicle membrane. Involved in endocytosis and intracellular vesicle trafficking, both during interphase and at the end of mitosis. Required for efficient progress through mitosis and cytokinesis. Required for normal formation of the cleavage furrow at the end of mitosis. Plays a role in endocytosis via clathrin-coated pits, but also clathrin-independent, actin-dependent fluid-phase endocytosis. Plays a role in macropinocytosis. Binds to membranes enriched in phosphatidylinositol 4,5-bisphosphate and promotes membrane tubulation. Stimulates the GTPase activity of DNM2. Promotes DNM2 location at the plasma membrane. Together with DNM2, involved in autophagosome assembly by regulating trafficking from recycling endosomes of phospholipid scramblase ATG9A. This Mus musculus (Mouse) protein is Sorting nexin-18.